The sequence spans 452 residues: Type II methyltransferase M.EcaI (452 aa).

It belongs to the N(4)/N(6)-methyltransferase family.

It catalyses the reaction a 2'-deoxyadenosine in DNA + S-adenosyl-L-methionine = an N(6)-methyl-2'-deoxyadenosine in DNA + S-adenosyl-L-homocysteine + H(+). A beta subtype methylase, recognizes the double-stranded sequence 5'-GGTNACC-3', methylates A-5 on both strands and protects the DNA from cleavage by the EcaI endonuclease. This chain is Type II methyltransferase M.EcaI (ecaIM), found in Enterobacter cloacae.